Reading from the N-terminus, the 200-residue chain is Large ribosomal subunit protein uL4 (200 aa).

The disordered stretch occupies residues 42 to 65 (TRAQKTRSEVSGGGAKPWRQKGTG).

The protein belongs to the universal ribosomal protein uL4 family. As to quaternary structure, part of the 50S ribosomal subunit.

Functionally, one of the primary rRNA binding proteins, this protein initially binds near the 5'-end of the 23S rRNA. It is important during the early stages of 50S assembly. It makes multiple contacts with different domains of the 23S rRNA in the assembled 50S subunit and ribosome. In terms of biological role, forms part of the polypeptide exit tunnel. The protein is Large ribosomal subunit protein uL4 of Vibrio parahaemolyticus serotype O3:K6 (strain RIMD 2210633).